Here is a 179-residue protein sequence, read N- to C-terminus: MKEKIISEINLDLVFQCNNFSQFSNKLKDTKTNLIFESIFWEKVFLSWINTILKNEDYELPNYIFDKKSFSLGLQIISNQEIASLNKKWMQKNGPTDVLSFPIISDESLNNLDHIELGDIFISLEMALEQSYEYKHSIYREMIWLASHGFLHLLGWEHNNEHDLENMLNFQEYLITRLD.

Residues His148, His152, and His158 each coordinate Zn(2+).

It belongs to the endoribonuclease YbeY family. The cofactor is Zn(2+).

The protein resides in the cytoplasm. Single strand-specific metallo-endoribonuclease involved in late-stage 70S ribosome quality control and in maturation of the 3' terminus of the 16S rRNA. In Prochlorococcus marinus (strain AS9601), this protein is Endoribonuclease YbeY.